A 598-amino-acid chain; its full sequence is Elongation factor 4 (598 aa).

Residues 2–184 (QHIRNFSIIA…TVVRRVPPPK (183 aa)) form the tr-type G domain. Residues 14–19 (DHGKST) and 131–134 (NKID) each bind GTP.

The protein belongs to the TRAFAC class translation factor GTPase superfamily. Classic translation factor GTPase family. LepA subfamily.

Its subcellular location is the cell inner membrane. It carries out the reaction GTP + H2O = GDP + phosphate + H(+). Functionally, required for accurate and efficient protein synthesis under certain stress conditions. May act as a fidelity factor of the translation reaction, by catalyzing a one-codon backward translocation of tRNAs on improperly translocated ribosomes. Back-translocation proceeds from a post-translocation (POST) complex to a pre-translocation (PRE) complex, thus giving elongation factor G a second chance to translocate the tRNAs correctly. Binds to ribosomes in a GTP-dependent manner. This chain is Elongation factor 4, found in Aromatoleum aromaticum (strain DSM 19018 / LMG 30748 / EbN1) (Azoarcus sp. (strain EbN1)).